The primary structure comprises 237 residues: MDYSQLMGFGPDGWGYDMLRATAMTMAVAFSGFTIGLVFGCLGAAASLSSSGALQAAASGYTTALRGIPDLLVIYLFYFGSSSVISNVASLFGSSGFVGASTFLIGALAIGVVSGAYQTQVLRGAVLALNKGEIEAGRAYGMGALLLFRRIVLPQAARYALPGVGNVWQLVLKESALISVIGLVELMRQAQVGSGSTRQPFSFYLTAAALYLLITFVSGQVFRLAETRSMRGLQRGV.

The ABC transmembrane type-1 domain maps to 22–222 (TAMTMAVAFS…LITFVSGQVF (201 aa)). 4 consecutive transmembrane segments (helical) span residues 26–46 (MAVA…GAAA), 72–92 (LVIY…ASLF), 96–116 (GFVG…VSGA), and 202–222 (SFYL…GQVF).

Belongs to the binding-protein-dependent transport system permease family. HisMQ subfamily.

The protein resides in the cell inner membrane. In terms of biological role, component of the octopine active transport system probably consisting of four subunits: Q, M, P and T. The polypeptide is Octopine transport system permease protein OccQ (occQ) (Agrobacterium tumefaciens (strain Ach5)).